A 168-amino-acid polypeptide reads, in one-letter code: Photosystem I assembly protein Ycf3 (168 aa).

3 TPR repeats span residues Ala-35 to Pro-68, Ser-72 to Leu-105, and Gly-120 to Asn-153.

Belongs to the Ycf3 family. As to quaternary structure, interacts with Y3IP1.

The protein localises to the plastid. The protein resides in the chloroplast thylakoid membrane. In terms of biological role, essential for the assembly of the photosystem I (PSI) complex. May act as a chaperone-like factor to guide the assembly of the PSI subunits. The protein is Photosystem I assembly protein Ycf3 of Arabidopsis thaliana (Mouse-ear cress).